The primary structure comprises 203 residues: Proteasome subunit beta 1 (203 aa).

The propeptide at Met-1–Gly-7 is removed in mature form; by autocatalysis. The active-site Nucleophile is Thr-8.

Belongs to the peptidase T1B family. As to quaternary structure, the 20S proteasome core is composed of 14 alpha and 14 beta subunits that assemble into four stacked heptameric rings, resulting in a barrel-shaped structure. The two inner rings, each composed of seven catalytic beta subunits, are sandwiched by two outer rings, each composed of seven alpha subunits. The catalytic chamber with the active sites is on the inside of the barrel. Has a gated structure, the ends of the cylinder being occluded by the N-termini of the alpha-subunits. Is capped at one or both ends by the proteasome regulatory ATPase, PAN.

It is found in the cytoplasm. The catalysed reaction is Cleavage of peptide bonds with very broad specificity.. Its activity is regulated as follows. The formation of the proteasomal ATPase PAN-20S proteasome complex, via the docking of the C-termini of PAN into the intersubunit pockets in the alpha-rings, triggers opening of the gate for substrate entry. Interconversion between the open-gate and close-gate conformations leads to a dynamic regulation of the 20S proteasome proteolysis activity. Its function is as follows. Component of the proteasome core, a large protease complex with broad specificity involved in protein degradation. The sequence is that of Proteasome subunit beta 1 from Thermococcus kodakarensis (strain ATCC BAA-918 / JCM 12380 / KOD1) (Pyrococcus kodakaraensis (strain KOD1)).